An 85-amino-acid polypeptide reads, in one-letter code: V-type proton ATPase subunit f (85 aa).

Transmembrane regions (helical) follow at residues 13–33 (CTGLSLIGIVFLLVLSYLFSI) and 56–76 (CLGAVVIYAVFFLFCGSQVIV).

As to quaternary structure, V-ATPase is a heteromultimeric enzyme composed of a peripheral catalytic V1 complex (components A to H) attached to an integral membrane V0 proton pore complex (components: a, c, c', c'', d, e, f and VOA1).

The protein resides in the endoplasmic reticulum membrane. In terms of biological role, accessory component of the V0 complex of vacuolar(H+)-ATPase (V-ATPase), a multisubunit enzyme composed of a peripheral complex (V1) that hydrolyzes ATP and a membrane integral complex (V0) that translocates protons. V-ATPase is responsible for acidifying and maintaining the pH of intracellular compartments. The sequence is that of V-type proton ATPase subunit f from Schizosaccharomyces pombe (strain 972 / ATCC 24843) (Fission yeast).